Here is a 557-residue protein sequence, read N- to C-terminus: Urocanate hydratase (557 aa).

NAD(+) is bound by residues 53–54 (GG), Gln131, 177–179 (GMG), Asp197, Arg202, 243–244 (NA), 264–268 (QTSAH), 274–275 (YL), and Tyr323. The active site involves Cys411. Gly493 provides a ligand contact to NAD(+).

This sequence belongs to the urocanase family. Requires NAD(+) as cofactor.

It localises to the cytoplasm. The enzyme catalyses 4-imidazolone-5-propanoate = trans-urocanate + H2O. Its pathway is amino-acid degradation; L-histidine degradation into L-glutamate; N-formimidoyl-L-glutamate from L-histidine: step 2/3. Functionally, catalyzes the conversion of urocanate to 4-imidazolone-5-propionate. The chain is Urocanate hydratase from Hahella chejuensis (strain KCTC 2396).